A 105-amino-acid chain; its full sequence is Co-chaperonin GroES 3 (105 aa).

Belongs to the GroES chaperonin family. Heptamer of 7 subunits arranged in a ring. Interacts with the chaperonin GroEL.

It localises to the cytoplasm. In terms of biological role, together with the chaperonin GroEL, plays an essential role in assisting protein folding. The GroEL-GroES system forms a nano-cage that allows encapsulation of the non-native substrate proteins and provides a physical environment optimized to promote and accelerate protein folding. GroES binds to the apical surface of the GroEL ring, thereby capping the opening of the GroEL channel. This chain is Co-chaperonin GroES 3, found in Rhizobium meliloti (strain 1021) (Ensifer meliloti).